Here is a 432-residue protein sequence, read N- to C-terminus: Proteinase-activated receptor 1 (432 aa).

Positions 1–21 (MGPRRLLLVAVGLSLCGPLLS) are cleaved as a signal peptide. Residues 22–45 (SRVPMRQPESERMYATPYATPNPR) constitute a propeptide, removed for receptor activation. Topologically, residues 46 to 109 (SFFLRNPSED…SGYLTSPWLT (64 aa)) are extracellular. N-linked (GlcNAc...) asparagine glycosylation is found at N69 and N82. Residues 110–135 (LFIPSVYTFVFIVSLPLNILAIAVFV) traverse the membrane as a helical segment. Residues 136-144 (FRMKVKKPA) are Cytoplasmic-facing. Residues 145 to 164 (VVYMLHLAMADVLFVSVLPF) traverse the membrane as a helical segment. Residues 165 to 183 (KISYYFSGTDWQFGSGMCR) lie on the Extracellular side of the membrane. C182 and C261 are oxidised to a cystine. A helical membrane pass occupies residues 184–205 (FATAACYCNMYASIMLMTVISI). The Cytoplasmic portion of the chain corresponds to 206–225 (DRFLAVVYPIQSLSWRTLGR). A helical transmembrane segment spans residues 226–246 (ANFTCVVIWVMAIMGVVPLLL). Topologically, residues 247–275 (KEQTTQVPGLNITTCHDVLNETLLHGFYS) are extracellular. N257 and N266 each carry an N-linked (GlcNAc...) asparagine glycan. Residues 276–295 (YYFSAFSAIFFLVPLIISTV) traverse the membrane as a helical segment. Topologically, residues 296-318 (CYTSIIRCLSSSAVANRSKKSRA) are cytoplasmic. The chain crosses the membrane as a helical span at residues 319 to 341 (LFLSAAVFCIFIVCFGPTNVLLI). The Extracellular portion of the chain corresponds to 342–357 (VHYLLLSDSPGTETAY). The helical transmembrane segment at 358 to 381 (FAYLLCVCVTSVASCIDPLIYYYA) threads the bilayer. At 382-432 (SSECQKHLYSILCCRESSDSNSCNSTGQLMPSKMDTCSSHLNNSIYKKLLA) the chain is on the cytoplasmic side. S425 is modified (phosphoserine).

This sequence belongs to the G-protein coupled receptor 1 family. Post-translationally, proteolytic cleavage by thrombin generates a new N-terminus that functions as a tethered ligand. Also proteolytically cleaved by cathepsin CTSG. Phosphorylated in the C-terminal tail; probably mediating desensitization prior to the uncoupling and internalization of the receptor. As to expression, expressed in primary cultured oligodendrocytes.

Its subcellular location is the cell membrane. Its function is as follows. High affinity receptor that binds the activated thrombin, leading to calcium release from intracellular stores. The thrombin-activated receptor signaling pathway is mediated through PTX-insensitive G proteins, activation of phospholipase C resulting in the production of 1D-myo-inositol 1,4,5-trisphosphate (InsP3) which binds to InsP3 receptors causing calcium release from the stores. In astrocytes, the calcium released into the cytosol allows the Ca(2+)-dependent release of L-glutamate into the synaptic cleft through BEST1, that targets the neuronal postsynaptic GRIN2A/NMDAR receptor resulting in the synaptic plasticity regulation. May play a role in platelets activation and in vascular development. Mediates up-regulation of pro-inflammatory cytokines, such as MCP-1/CCL2 and IL6, triggered by coagulation factor Xa (F10) in cardiac fibroblasts and umbilical vein endothelial cells. This is Proteinase-activated receptor 1 from Rattus norvegicus (Rat).